A 402-amino-acid polypeptide reads, in one-letter code: Argininosuccinate synthase (402 aa).

ATP is bound at residue 7–15 (LYSGGLDTS). L-citrulline is bound at residue tyrosine 83. Glycine 113 serves as a coordination point for ATP. 3 residues coordinate L-aspartate: threonine 115, asparagine 119, and aspartate 120. Asparagine 119 provides a ligand contact to L-citrulline. L-citrulline-binding residues include arginine 123, serine 169, serine 178, glutamate 253, and tyrosine 265.

The protein belongs to the argininosuccinate synthase family. Type 1 subfamily. As to quaternary structure, homotetramer.

The protein localises to the cytoplasm. It carries out the reaction L-citrulline + L-aspartate + ATP = 2-(N(omega)-L-arginino)succinate + AMP + diphosphate + H(+). Its pathway is amino-acid biosynthesis; L-arginine biosynthesis; L-arginine from L-ornithine and carbamoyl phosphate: step 2/3. This Thermoplasma acidophilum (strain ATCC 25905 / DSM 1728 / JCM 9062 / NBRC 15155 / AMRC-C165) protein is Argininosuccinate synthase.